The following is a 126-amino-acid chain: Large ribosomal subunit protein eL8 (126 aa).

It belongs to the eukaryotic ribosomal protein eL8 family. As to quaternary structure, part of the 50S ribosomal subunit. Probably part of the RNase P complex.

Its subcellular location is the cytoplasm. Its function is as follows. Multifunctional RNA-binding protein that recognizes the K-turn motif in ribosomal RNA, the RNA component of RNase P, box H/ACA, box C/D and box C'/D' sRNAs. This is Large ribosomal subunit protein eL8 from Cenarchaeum symbiosum (strain A).